The primary structure comprises 466 residues: Ribulose bisphosphate carboxylase large chain (466 aa).

Residue K5 is modified to N6,N6,N6-trimethyllysine. Positions 114 and 164 each coordinate substrate. Residue K166 is the Proton acceptor of the active site. Residue K168 participates in substrate binding. 3 residues coordinate Mg(2+): K192, D194, and E195. An N6-carboxylysine modification is found at K192. H285 acts as the Proton acceptor in catalysis. Positions 286, 318, and 370 each coordinate substrate.

The protein belongs to the RuBisCO large chain family. Type I subfamily. In terms of assembly, heterohexadecamer of 8 large chains and 8 small chains; disulfide-linked. The disulfide link is formed within the large subunit homodimers. It depends on Mg(2+) as a cofactor. In terms of processing, the disulfide bond which can form in the large chain dimeric partners within the hexadecamer appears to be associated with oxidative stress and protein turnover.

The protein resides in the plastid. It is found in the chloroplast. It catalyses the reaction 2 (2R)-3-phosphoglycerate + 2 H(+) = D-ribulose 1,5-bisphosphate + CO2 + H2O. It carries out the reaction D-ribulose 1,5-bisphosphate + O2 = 2-phosphoglycolate + (2R)-3-phosphoglycerate + 2 H(+). Its function is as follows. RuBisCO catalyzes two reactions: the carboxylation of D-ribulose 1,5-bisphosphate, the primary event in carbon dioxide fixation, as well as the oxidative fragmentation of the pentose substrate in the photorespiration process. Both reactions occur simultaneously and in competition at the same active site. This chain is Ribulose bisphosphate carboxylase large chain, found in Averrhoa carambola (Star fruit).